A 445-amino-acid polypeptide reads, in one-letter code: Tubulin beta-3 chain (445 aa).

GTP is bound by residues Gln11, Glu69, Ser138, Gly142, Thr143, Gly144, Asn204, and Asn226. Glu69 serves as a coordination point for Mg(2+). Polar residues predominate over residues 417 to 426 (DLVSEYQQYQ). The tract at residues 417 to 445 (DLVSEYQQYQEASADDEADEFDEEEGDEE) is disordered. A compositionally biased stretch (acidic residues) spans 429–445 (SADDEADEFDEEEGDEE).

The protein belongs to the tubulin family. As to quaternary structure, dimer of alpha and beta chains. A typical microtubule is a hollow water-filled tube with an outer diameter of 25 nm and an inner diameter of 15 nM. Alpha-beta heterodimers associate head-to-tail to form protofilaments running lengthwise along the microtubule wall with the beta-tubulin subunit facing the microtubule plus end conferring a structural polarity. Microtubules usually have 13 protofilaments but different protofilament numbers can be found in some organisms and specialized cells. The cofactor is Mg(2+).

Its subcellular location is the cytoplasm. It is found in the cytoskeleton. Tubulin is the major constituent of microtubules, a cylinder consisting of laterally associated linear protofilaments composed of alpha- and beta-tubulin heterodimers. Microtubules grow by the addition of GTP-tubulin dimers to the microtubule end, where a stabilizing cap forms. Below the cap, tubulin dimers are in GDP-bound state, owing to GTPase activity of alpha-tubulin. The protein is Tubulin beta-3 chain (TUBB3) of Oomycete-like sp. (strain MacKay2000).